We begin with the raw amino-acid sequence, 634 residues long: Pentatricopeptide repeat-containing protein At5g14080 (634 aa).

PPR repeat units follow at residues 81-115 (DSISYHSIFKSLSLSRQFSAMDALFKQVKSNKILL), 116-150 (DSSVYRSLIDTLVLGRKAQSAFWVLEEAFSTGQEI), 151-185 (HPDVCNRLLAGLTSDGCYDYAQKLFVKMRHKGVSL), 186-220 (NTLGFGVYIGWFCRSSETNQLLRLVDEVKKANLNI), 222-256 (GSIIALLILHSLCKCSREMDAFYILEELRNIDCKP), 257-291 (DFMAYRVIAEAFVVTGNLYERQVVLKKKRKLGVAP), 292-326 (RSSDYRAFILDLISAKRLTEAKEVAEVIVSGKFPM), 327-360 (DNDILDALIGSVSAVDPDSAVEFLVYMVSTGKLP), 361-395 (AIRTLSKLSKNLCRHDKSDHLIKAYELLSSKGYFS), 396-430 (ELQSYSLMISFLCKAGRVRESYTALQEMKKEGLAP), 431-465 (DVSLYNALIEACCKAEMIRPAKKLWDEMFVEGCKM), 466-500 (NLTTYNVLIRKLSEEGEAEESLRLFDKMLERGIEP), and 501-535 (DETIYMSLIEGLCKETKIEAAMEVFRKCMERDHKT).

The protein belongs to the PPR family. P subfamily.

This Arabidopsis thaliana (Mouse-ear cress) protein is Pentatricopeptide repeat-containing protein At5g14080.